Here is a 298-residue protein sequence, read N- to C-terminus: Acetylglutamate kinase (298 aa).

Substrate-binding positions include 69 to 70 (GG), Arg91, and Asn196.

The protein belongs to the acetylglutamate kinase family. ArgB subfamily.

The protein localises to the cytoplasm. The catalysed reaction is N-acetyl-L-glutamate + ATP = N-acetyl-L-glutamyl 5-phosphate + ADP. Its pathway is amino-acid biosynthesis; L-arginine biosynthesis; N(2)-acetyl-L-ornithine from L-glutamate: step 2/4. Catalyzes the ATP-dependent phosphorylation of N-acetyl-L-glutamate. This chain is Acetylglutamate kinase, found in Rhodopseudomonas palustris (strain BisA53).